The following is a 307-amino-acid chain: MKFQKRNIQLVLILLLILNNCFINSQVENSKKEKVDVSALIQSYGSELFNYLNNWNKVEENNNKNNNNNNNNNNNNNNNNKNSKVKNDDSIVNTFSNYGNQILNYLNIGDGGEKQKQNQKEKENQSVFSKFSNNVLGLFNFEKTKDKKEDEGILPSIIKNIQDYVKWGKNENNESSGDKYPNFETQSSSFSHSPYGDIFGININDIIASPLLNEISDSSLNYLKQQFGLSNQIIQLLIQFRNTIIFAITFIIFLFTYLIIYYLASIGNSIVISFIIGVLTVFLWVIITLLFTIVIGYKKNGEKTLEL.

The signal sequence occupies residues 1–25 (MKFQKRNIQLVLILLLILNNCFINS). Residues 60–90 (ENNNKNNNNNNNNNNNNNNNNKNSKVKNDDS) are disordered. Residues 63–82 (NKNNNNNNNNNNNNNNNNKN) show a composition bias toward low complexity. Residues asparagine 124 and asparagine 173 are each glycosylated (N-linked (GlcNAc...) asparagine). The next 2 membrane-spanning stretches (helical) occupy residues 244-264 (IIFAITFIIFLFTYLIIYYLA) and 275-295 (IIGVLTVFLWVIITLLFTIVI).

The protein localises to the membrane. This is an uncharacterized protein from Dictyostelium discoideum (Social amoeba).